Here is a 210-residue protein sequence, read N- to C-terminus: Small ribosomal subunit protein uS5 (210 aa).

The segment covering 1–11 (MTQPNTQTTPN) has biased composition (polar residues). The tract at residues 1–56 (MTQPNTQTTPNDVPAAAEGQHQEQQQQQRRGGGRERRGGGRRGDRRGQERDSEWQE) is disordered. Residues 18–29 (EGQHQEQQQQQR) show a composition bias toward low complexity. The segment covering 32 to 56 (GGRERRGGGRRGDRRGQERDSEWQE) has biased composition (basic and acidic residues). The S5 DRBM domain occupies 54-117 (WQERVVQIRR…ADGKKHLVKV (64 aa)).

Belongs to the universal ribosomal protein uS5 family. Part of the 30S ribosomal subunit. Contacts proteins S4 and S8.

Functionally, with S4 and S12 plays an important role in translational accuracy. Its function is as follows. Located at the back of the 30S subunit body where it stabilizes the conformation of the head with respect to the body. The protein is Small ribosomal subunit protein uS5 of Prochlorococcus marinus (strain MIT 9303).